A 163-amino-acid chain; its full sequence is ATP synthase subunit b 1 (163 aa).

Residues 5 to 25 form a helical membrane-spanning segment; that stretch reads FDATFFAFVGLVLFLALVVYL.

This sequence belongs to the ATPase B chain family. As to quaternary structure, F-type ATPases have 2 components, F(1) - the catalytic core - and F(0) - the membrane proton channel. F(1) has five subunits: alpha(3), beta(3), gamma(1), delta(1), epsilon(1). F(0) has three main subunits: a(1), b(2) and c(10-14). The alpha and beta chains form an alternating ring which encloses part of the gamma chain. F(1) is attached to F(0) by a central stalk formed by the gamma and epsilon chains, while a peripheral stalk is formed by the delta and b chains.

It is found in the cell inner membrane. In terms of biological role, f(1)F(0) ATP synthase produces ATP from ADP in the presence of a proton or sodium gradient. F-type ATPases consist of two structural domains, F(1) containing the extramembraneous catalytic core and F(0) containing the membrane proton channel, linked together by a central stalk and a peripheral stalk. During catalysis, ATP synthesis in the catalytic domain of F(1) is coupled via a rotary mechanism of the central stalk subunits to proton translocation. Functionally, component of the F(0) channel, it forms part of the peripheral stalk, linking F(1) to F(0). This chain is ATP synthase subunit b 1, found in Rhizobium leguminosarum bv. trifolii (strain WSM2304).